A 488-amino-acid chain; its full sequence is Germacrene A acid 8-beta-hydroxylase (488 aa).

The chain crosses the membrane as a helical; Signal-anchor for type II membrane protein span at residues 2 to 22 (ELFTIFSIVVSSLILFTFWSL). N407 is a glycosylation site (N-linked (GlcNAc...) asparagine). Heme is bound at residue C429.

This sequence belongs to the cytochrome P450 family. Heme is required as a cofactor. As to expression, expressed in leaf primordia.

The protein resides in the membrane. The catalysed reaction is germacra-1(10),4,11(13)-trien-12-oate + reduced [NADPH--hemoprotein reductase] + O2 = 8beta-hydroxygermacra-1(10),4,11(13)-trien-12-oate + oxidized [NADPH--hemoprotein reductase] + H2O + H(+). The protein operates within secondary metabolite biosynthesis; terpenoid biosynthesis. Functionally, involved in the biosynthesis of germacrene-derived sesquiterpene lactones. Hydroxylates germacrene A acid to 8-beta-hydroxy-germacrene A acid. Unlike 6-alpha-hydroxy-germacrene A acid, this compound cannot undergo spontaneous lactonization. The sequence is that of Germacrene A acid 8-beta-hydroxylase from Helianthus annuus (Common sunflower).